The primary structure comprises 97 residues: Large ribosomal subunit protein uL23 (97 aa).

The protein belongs to the universal ribosomal protein uL23 family. In terms of assembly, part of the 50S ribosomal subunit. Contacts protein L29, and trigger factor when it is bound to the ribosome.

In terms of biological role, one of the early assembly proteins it binds 23S rRNA. One of the proteins that surrounds the polypeptide exit tunnel on the outside of the ribosome. Forms the main docking site for trigger factor binding to the ribosome. The protein is Large ribosomal subunit protein uL23 of Anaeromyxobacter dehalogenans (strain 2CP-C).